A 383-amino-acid chain; its full sequence is Arginine biosynthesis bifunctional protein ArgJ (383 aa).

Thr146, Lys168, Thr179, Glu259, Asn378, and Ser383 together coordinate substrate. The active-site Nucleophile is the Thr179.

The protein belongs to the ArgJ family. Heterotetramer of two alpha and two beta chains.

It localises to the cytoplasm. It carries out the reaction N(2)-acetyl-L-ornithine + L-glutamate = N-acetyl-L-glutamate + L-ornithine. The catalysed reaction is L-glutamate + acetyl-CoA = N-acetyl-L-glutamate + CoA + H(+). It functions in the pathway amino-acid biosynthesis; L-arginine biosynthesis; L-ornithine and N-acetyl-L-glutamate from L-glutamate and N(2)-acetyl-L-ornithine (cyclic): step 1/1. It participates in amino-acid biosynthesis; L-arginine biosynthesis; N(2)-acetyl-L-ornithine from L-glutamate: step 1/4. Functionally, catalyzes two activities which are involved in the cyclic version of arginine biosynthesis: the synthesis of N-acetylglutamate from glutamate and acetyl-CoA as the acetyl donor, and of ornithine by transacetylation between N(2)-acetylornithine and glutamate. The sequence is that of Arginine biosynthesis bifunctional protein ArgJ from Streptomyces avermitilis (strain ATCC 31267 / DSM 46492 / JCM 5070 / NBRC 14893 / NCIMB 12804 / NRRL 8165 / MA-4680).